The chain runs to 257 residues: MTNRSQDKHILVNRDALIDGTIVSVLVTGSAITLYKGYTCYLKQLTNASQIPTKVFRRKWLYGKVTSVGDGDNFHFFHMPGGVLGGWGWIRAVPKLTKNEKKTASLSFHWGTNKLKQQNATYKNKRNLPTISVRACGIDAPECAHFGNPAQPYSEDALIWLRHRILGKKLWIKPLKTDQYGRCVASIRIWTWLGYSDICLEMIKEGLAVVYEGKTGAEFDGREGKYRRHEFIARAKKKGLWSQKRLQTPGEYKKRYQ.

Residues L17–L34 traverse the membrane as a helical segment. Positions K59–Q243 constitute a TNase-like domain. Residue R134 is part of the active site. Residue D139 participates in Ca(2+) binding. Active-site residues include E142 and R182.

This sequence belongs to the LCL3 family.

It is found in the mitochondrion. The protein resides in the membrane. The protein is Probable endonuclease LCL3 (LCL3) of Candida glabrata (strain ATCC 2001 / BCRC 20586 / JCM 3761 / NBRC 0622 / NRRL Y-65 / CBS 138) (Yeast).